The chain runs to 416 residues: Histidine--tRNA ligase (416 aa).

Belongs to the class-II aminoacyl-tRNA synthetase family. In terms of assembly, homodimer.

It localises to the cytoplasm. The catalysed reaction is tRNA(His) + L-histidine + ATP = L-histidyl-tRNA(His) + AMP + diphosphate + H(+). The sequence is that of Histidine--tRNA ligase from Dictyoglomus thermophilum (strain ATCC 35947 / DSM 3960 / H-6-12).